Consider the following 312-residue polypeptide: MSGIDPKRFGKVAVLLGGDSAEREVSLNSGRLVLQGLRDAGIDAHPFDPAQRPLAALKDEGFVRAFNALHGGYGENGQIQGALDFYGIRYTGSGVLGSALGLDKFRTKLVWQQTGIPTPPFETVMRGDDYAARAQDIAAKLGVPLFVKPASEGSSVAVEKVKSADALPAALEEAAKHDKIVIVEKSIEGGGEYTACIAADLDLPLIRIVPAGEFYDYHAKYIANDTQYLIPCGLDAAKEAEFKRIARRAFDVLGCTDWGRADFMLDAAGNPYFLEVNTAPGMTDHSLPPKAARAVGIGYSELVVKVLSLTLD.

Residues 108–308 form the ATP-grasp domain; sequence KLVWQQTGIP…YSELVVKVLS (201 aa). 138–193 is an ATP binding site; it reads AAKLGVPLFVKPASEGSSVAVEKVKSADALPAALEEAAKHDKIVIVEKSIEGGGEY. Mg(2+) contacts are provided by D262, E275, and N277.

Belongs to the D-alanine--D-alanine ligase family. Mg(2+) serves as cofactor. Requires Mn(2+) as cofactor.

It is found in the cytoplasm. The catalysed reaction is 2 D-alanine + ATP = D-alanyl-D-alanine + ADP + phosphate + H(+). It participates in cell wall biogenesis; peptidoglycan biosynthesis. Its function is as follows. Cell wall formation. This chain is D-alanine--D-alanine ligase, found in Burkholderia pseudomallei (strain 668).